A 487-amino-acid chain; its full sequence is Wax ester synthase/diacylglycerol acyltransferase 3 (487 aa).

Residues 1 to 193 (MYTMKKGKDM…KHASSNKKSW (193 aa)) lie on the Cytoplasmic side of the membrane. Catalysis depends on His-151, which acts as the Proton acceptor. The helical transmembrane segment at 194-214 (WLVGRFWFMIRIIFTTVVELF) threads the bilayer. Residues 215 to 487 (KYLLTLCFMR…MEKGVHKMEV (273 aa)) lie on the Lumenal side of the membrane.

The protein in the N-terminal section; belongs to the long-chain O-acyltransferase family. As to expression, mostly expressed in flowers and siliques.

It is found in the cell membrane. It localises to the endoplasmic reticulum membrane. It catalyses the reaction an acyl-CoA + a 1,2-diacyl-sn-glycerol = a triacyl-sn-glycerol + CoA. It carries out the reaction a long chain fatty alcohol + a fatty acyl-CoA = a wax ester + CoA. It participates in glycerolipid metabolism; triacylglycerol biosynthesis. It functions in the pathway lipid metabolism. In terms of biological role, bifunctional wax ester synthase/diacylglycerol acyltransferase. Involved in cuticular wax biosynthesis. The chain is Wax ester synthase/diacylglycerol acyltransferase 3 from Arabidopsis thaliana (Mouse-ear cress).